The sequence spans 396 residues: UPF0046 protein T07D4.2 (396 aa).

Residues 73-94 are disordered; that stretch reads SRRGSIASGIPMDKKTRRKLSN.

The protein belongs to the UPF0046 family.

The sequence is that of UPF0046 protein T07D4.2 from Caenorhabditis elegans.